A 393-amino-acid polypeptide reads, in one-letter code: Prokineticin receptor 1 (393 aa).

Over 1-62 (METTMGFMDD…TNSRTFFAAK (62 aa)) the chain is Extracellular. N-linked (GlcNAc...) asparagine glycosylation is found at N11, N14, and N36. The chain crosses the membrane as a helical span at residues 63–83 (IVIGMALVGIMLVCGIGNFIF). Topologically, residues 84 to 98 (IAALVRYKKLRNLTN) are cytoplasmic. Residues 99 to 119 (LLIANLAISDFLVAIVCCPFE) traverse the membrane as a helical segment. The Extracellular portion of the chain corresponds to 120 to 146 (MDYYVVRQLSWEHGHVLCTSVNYLRTV). C137 and C217 are joined by a disulfide. The chain crosses the membrane as a helical span at residues 147-167 (SLYVSTNALLAIAIDRYLAIV). Residues 168 to 180 (HPLRPRMKCQTAT) are Cytoplasmic-facing. Residues 181–201 (GLIALVWTVSILIAIPSAYFT) traverse the membrane as a helical segment. Over 202 to 232 (TETVLVIVKSQEKIFCGQIWPVDQQLYYKSY) the chain is Extracellular. The chain crosses the membrane as a helical span at residues 233-253 (FLFIFGIEFVGPVVTMTLCYA). The Cytoplasmic segment spans residues 254-282 (RISRELWFKAVPGFQTEQIRKRLRCRRKT). Residues 283 to 303 (VLVLMCILTAYVLCWAPFYGF) form a helical membrane-spanning segment. The Extracellular segment spans residues 304–322 (TIVRDFFPTVFVKEKHYLT). Residues 323–343 (AFYIVECIAMSNSMINTLCFV) form a helical membrane-spanning segment. Residues 344-393 (TVKNDTVKYFKKIMLLHWKASYNGGKSSADLDLKTIGMPATEEVDCIRLK) lie on the Cytoplasmic side of the membrane.

It belongs to the G-protein coupled receptor 1 family. In terms of tissue distribution, localizes to glandular epithelium, stroma and vascular endothelial cells of first trimester decidua (at protein level). Up-regulated in first trimester decidua when compared with non-pregnant endometrium. Expressed in the stomach, throughout the small intestine, colon, rectum, thyroid gland, pituitary gland, salivary gland, adrenal gland, testis, ovary, brain, spleen, prostate and pancreas.

The protein localises to the cell membrane. Receptor for prokineticin 1. Exclusively coupled to the G(q) subclass of heteromeric G proteins. Activation leads to mobilization of calcium, stimulation of phosphoinositide turnover and activation of p44/p42 mitogen-activated protein kinase. May play a role during early pregnancy. The protein is Prokineticin receptor 1 (PROKR1) of Homo sapiens (Human).